The primary structure comprises 706 residues: Ribosomal RNA large subunit methyltransferase K/L (706 aa).

One can recognise a THUMP domain in the interval 43-154 (LMYQSLLWSR…RDMASVALDL (112 aa)).

This sequence belongs to the methyltransferase superfamily. RlmKL family.

It localises to the cytoplasm. It catalyses the reaction guanosine(2445) in 23S rRNA + S-adenosyl-L-methionine = N(2)-methylguanosine(2445) in 23S rRNA + S-adenosyl-L-homocysteine + H(+). It carries out the reaction guanosine(2069) in 23S rRNA + S-adenosyl-L-methionine = N(2)-methylguanosine(2069) in 23S rRNA + S-adenosyl-L-homocysteine + H(+). In terms of biological role, specifically methylates the guanine in position 2445 (m2G2445) and the guanine in position 2069 (m7G2069) of 23S rRNA. The polypeptide is Ribosomal RNA large subunit methyltransferase K/L (Yersinia pseudotuberculosis serotype O:1b (strain IP 31758)).